Reading from the N-terminus, the 203-residue chain is Akirin-2 (203 aa).

A phosphoserine mark is found at serine 18 and serine 21. Positions 22–27 (PKRRRC) match the Nuclear localization signal motif. A Phosphoserine modification is found at serine 57. The short motif at 200-203 (SYVS) is the SYVS motif element.

Belongs to the akirin family. As to quaternary structure, homodimer. Interacts with IPO9; the interaction is direct. Associates with 20S and 26S proteasomes. Interacts with SMARCD1; promoting SWI/SNF complex recruitment. Interacts with NFKBIZ. Interacts with YWHAB. Post-translationally, polyubiquitinated. Polyubiquitination is dependent of UBR5 that extends pre-ubiquitinated AKIRIN2. Widely expressed. Most abundant in the lung, followed by the skeletal muscle, heart, liver, fat, thymus, lymph node, small intestine, kidney and spleen. In skeletal muscle, expressed at higher level in fast extensor digitorum longus (EDL) and longissimus lumborum (LL) muscles than in slow soleus (SOL) muscles.

It is found in the nucleus. The protein localises to the cytoplasm. Its subcellular location is the membrane. In terms of biological role, molecular adapter that acts as a bridge between a variety of multiprotein complexes, and which is involved in embryonic development, immunity, myogenesis and brain development. Plays a key role in nuclear protein degradation by promoting import of proteasomes into the nucleus: directly binds to fully assembled 20S proteasomes at one end and to nuclear import receptor IPO9 at the other end, bridging them together and mediating the import of pre-assembled proteasome complexes through the nuclear pore. Involved in innate immunity by regulating the production of interleukin-6 (IL6) downstream of Toll-like receptor (TLR): acts by bridging the NF-kappa-B inhibitor NFKBIZ and the SWI/SNF complex, leading to promote induction of IL6. Also involved in adaptive immunity by promoting B-cell activation. Involved in brain development: required for the survival and proliferation of cerebral cortical progenitor cells. Involved in myogenesis: required for skeletal muscle formation and skeletal development, possibly by regulating expression of muscle differentiation factors. This chain is Akirin-2, found in Sus scrofa (Pig).